The following is a 412-amino-acid chain: Gamma-glutamyl phosphate reductase (412 aa).

The protein belongs to the gamma-glutamyl phosphate reductase family.

It localises to the cytoplasm. The enzyme catalyses L-glutamate 5-semialdehyde + phosphate + NADP(+) = L-glutamyl 5-phosphate + NADPH + H(+). It participates in amino-acid biosynthesis; L-proline biosynthesis; L-glutamate 5-semialdehyde from L-glutamate: step 2/2. Its function is as follows. Catalyzes the NADPH-dependent reduction of L-glutamate 5-phosphate into L-glutamate 5-semialdehyde and phosphate. The product spontaneously undergoes cyclization to form 1-pyrroline-5-carboxylate. The polypeptide is Gamma-glutamyl phosphate reductase (Streptococcus suis (strain 98HAH33)).